The chain runs to 146 residues: Ribosome maturation factor RimP (146 aa).

This sequence belongs to the RimP family.

It is found in the cytoplasm. In terms of biological role, required for maturation of 30S ribosomal subunits. This is Ribosome maturation factor RimP from Dechloromonas aromatica (strain RCB).